The chain runs to 416 residues: UDP-N-acetylmuramoylalanine--D-glutamate ligase (416 aa).

Position 104-110 (104-110) interacts with ATP; the sequence is GSNGKST.

This sequence belongs to the MurCDEF family.

The protein localises to the cytoplasm. It carries out the reaction UDP-N-acetyl-alpha-D-muramoyl-L-alanine + D-glutamate + ATP = UDP-N-acetyl-alpha-D-muramoyl-L-alanyl-D-glutamate + ADP + phosphate + H(+). Its pathway is cell wall biogenesis; peptidoglycan biosynthesis. Its function is as follows. Cell wall formation. Catalyzes the addition of glutamate to the nucleotide precursor UDP-N-acetylmuramoyl-L-alanine (UMA). This chain is UDP-N-acetylmuramoylalanine--D-glutamate ligase, found in Francisella tularensis subsp. tularensis (strain FSC 198).